The following is a 271-amino-acid chain: Glutamate racemase (271 aa).

Residues 12 to 13 and 44 to 45 contribute to the substrate site; these read DS and YG. Cys-75 serves as the catalytic Proton donor/acceptor. 76–77 is a binding site for substrate; it reads NS. Cys-185 functions as the Proton donor/acceptor in the catalytic mechanism. A substrate-binding site is contributed by 186–187; that stretch reads TH.

It belongs to the aspartate/glutamate racemases family.

The catalysed reaction is L-glutamate = D-glutamate. Its pathway is cell wall biogenesis; peptidoglycan biosynthesis. Provides the (R)-glutamate required for cell wall biosynthesis. The chain is Glutamate racemase from Mycobacterium bovis (strain BCG / Pasteur 1173P2).